Here is a 997-residue protein sequence, read N- to C-terminus: Protein translocase subunit SecA (997 aa).

ATP-binding positions include glutamine 84, 102-106, and aspartate 582; that span reads GEGKT. A disordered region spans residues 950–997; sequence PYVPVPEAKPEPSEVFGVERKRATPPPQPGLSRAERRRLMRQEKKRKK. Positions 957 to 971 are enriched in basic and acidic residues; that stretch reads AKPEPSEVFGVERKR. Positions 984–997 are enriched in basic residues; that stretch reads ERRRLMRQEKKRKK.

This sequence belongs to the SecA family. In terms of assembly, monomer and homodimer. Part of the essential Sec protein translocation apparatus which comprises SecA, SecYEG and auxiliary proteins SecDF. Other proteins may also be involved.

It localises to the cell inner membrane. It is found in the cytoplasm. The catalysed reaction is ATP + H2O + cellular proteinSide 1 = ADP + phosphate + cellular proteinSide 2.. In terms of biological role, part of the Sec protein translocase complex. Interacts with the SecYEG preprotein conducting channel. Has a central role in coupling the hydrolysis of ATP to the transfer of proteins into and across the cell membrane, serving as an ATP-driven molecular motor driving the stepwise translocation of polypeptide chains across the membrane. In Thermus thermophilus (strain ATCC BAA-163 / DSM 7039 / HB27), this protein is Protein translocase subunit SecA.